A 144-amino-acid polypeptide reads, in one-letter code: Large ribosomal subunit protein uL16 (144 aa).

It belongs to the universal ribosomal protein uL16 family. As to quaternary structure, part of the 50S ribosomal subunit.

Functionally, binds 23S rRNA and is also seen to make contacts with the A and possibly P site tRNAs. The protein is Large ribosomal subunit protein uL16 of Bacillus licheniformis (strain ATCC 14580 / DSM 13 / JCM 2505 / CCUG 7422 / NBRC 12200 / NCIMB 9375 / NCTC 10341 / NRRL NRS-1264 / Gibson 46).